The sequence spans 71 residues: Bacteriocin carnobacteriocin-A (71 aa).

Positions 1 to 18 (MNNVKELSIKEMQQVTGG) are excised as a propeptide. A disulfide bond links Cys-40 and Cys-69.

It localises to the secreted. Has antibacterial activity. The chain is Bacteriocin carnobacteriocin-A (cbnBA) from Carnobacterium maltaromaticum (Carnobacterium piscicola).